A 376-amino-acid chain; its full sequence is uncharacterized protein (376 aa).

It belongs to the glycosyltransferase 28 family.

This is an uncharacterized protein from Methanosarcina mazei (strain ATCC BAA-159 / DSM 3647 / Goe1 / Go1 / JCM 11833 / OCM 88) (Methanosarcina frisia).